Here is a 312-residue protein sequence, read N- to C-terminus: Heterotepalin-4 (312 aa).

The N-terminal stretch at 1–22 (MKSMLVVTISVWLILAPTSTWA) is a signal peptide. Cystine bridges form between C56-C280 and C107-C128. E197 is a catalytic residue. Residues 284–312 (YNQNAMFPQLIMSTYYNYMANLGDLFEEF) constitute a propeptide that is removed on maturation.

The catalysed reaction is Endohydrolysis of the N-glycosidic bond at one specific adenosine on the 28S rRNA.. Inhibits protein synthesis in vitro. The polypeptide is Heterotepalin-4 (Phytolacca heterotepala (Mexican pokeweed)).